Reading from the N-terminus, the 150-residue chain is Cytochrome c oxidase subunit 5A, mitochondrial (150 aa).

A mitochondrion-targeting transit peptide spans 1 to 41 (MLGAALRRCAVAATTRAGPRGLLHSARTPGPAAAIQSVRCY). An SIFI-degron motif is present at residues 2–17 (LGAALRRCAVAATTRA). N6-acetyllysine is present on residues lysine 87 and lysine 113. Phosphothreonine is present on threonine 141.

This sequence belongs to the cytochrome c oxidase subunit 5A family. In terms of assembly, component of the cytochrome c oxidase (complex IV, CIV), a multisubunit enzyme composed of 14 subunits. The complex is composed of a catalytic core of 3 subunits MT-CO1, MT-CO2 and MT-CO3, encoded in the mitochondrial DNA, and 11 supernumerary subunits COX4I, COX5A, COX5B, COX6A, COX6B, COX6C, COX7A, COX7B, COX7C, COX8 and NDUFA4, which are encoded in the nuclear genome. The complex exists as a monomer or a dimer and forms supercomplexes (SCs) in the inner mitochondrial membrane with NADH-ubiquinone oxidoreductase (complex I, CI) and ubiquinol-cytochrome c oxidoreductase (cytochrome b-c1 complex, complex III, CIII), resulting in different assemblies (supercomplex SCI(1)III(2)IV(1) and megacomplex MCI(2)III(2)IV(2)). Interacts with AFG1L. Interacts with RAB5IF. Post-translationally, in response to mitochondrial stress, the precursor protein is ubiquitinated by the SIFI complex in the cytoplasm before mitochondrial import, leading to its degradation. Within the SIFI complex, UBR4 initiates ubiquitin chain that are further elongated or branched by KCMF1.

It localises to the mitochondrion inner membrane. The protein operates within energy metabolism; oxidative phosphorylation. In terms of biological role, component of the cytochrome c oxidase, the last enzyme in the mitochondrial electron transport chain which drives oxidative phosphorylation. The respiratory chain contains 3 multisubunit complexes succinate dehydrogenase (complex II, CII), ubiquinol-cytochrome c oxidoreductase (cytochrome b-c1 complex, complex III, CIII) and cytochrome c oxidase (complex IV, CIV), that cooperate to transfer electrons derived from NADH and succinate to molecular oxygen, creating an electrochemical gradient over the inner membrane that drives transmembrane transport and the ATP synthase. Cytochrome c oxidase is the component of the respiratory chain that catalyzes the reduction of oxygen to water. Electrons originating from reduced cytochrome c in the intermembrane space (IMS) are transferred via the dinuclear copper A center (CU(A)) of subunit 2 and heme A of subunit 1 to the active site in subunit 1, a binuclear center (BNC) formed by heme A3 and copper B (CU(B)). The BNC reduces molecular oxygen to 2 water molecules using 4 electrons from cytochrome c in the IMS and 4 protons from the mitochondrial matrix. This chain is Cytochrome c oxidase subunit 5A, mitochondrial (COX5A), found in Pan troglodytes (Chimpanzee).